Consider the following 649-residue polypeptide: MGKIRKLDEQLSNLIAAGEVVERPASVVKELVENSIDANSTSIEIHLEEAGLSKIRIIDNGDGIAEEDCIVAFERHATSKIKDENDLFRIRTLGFRGEALPSIASVSELELVTSTGDAPGTHLIIKGGEIIKQEKTASRKGTDITVQNLFFNTPARLKYMKTIHTELGNITDIVYRIAMSHPEVSLKLFHNTKKLLHTSGNGDVRQVLAAIYSIQVAKKLIPIEAESLDFTIRGYVTLPEVTRASRNYMSTIVNGRYVRNYVLMKAIQQGYHTLLPVGRYPIGFLSIEMDPMLVDVNVHPAKLEVRFSKEQELLQFIEQTLQDAFKKVQLIPDAGVTTKKKTKDESVQEQFHFEHTKPKEPSMPNIVLPTGMDEAQEEESAEKPSVAPQLWQQPKQEWQPPQSLVREEESWQSTSKPLIEEKAAHNEQEWDHHEEEFELEELDELQNIEEIEMNGNDLPPLYPIGQMHGTYIFAQNDKGLYMIDQHAAQERINYEYFRDKVGQVTQEVQELLVPYRIDLSLNEFLRVEEQLEELKKVGLFLEQFGHQSFIVRSHPIWFPKGKETEIIDEMMQQVVKLKKVDIKKLREEAAIMMSCKASIKANQYLTNDQIFALLEELRTTSNPYTCPHGRPIIIHHSTYELEKMFKRVM.

The disordered stretch occupies residues K339 to T414. The segment covering T342 to E360 has biased composition (basic and acidic residues). Low complexity predominate over residues P388–Q402.

Belongs to the DNA mismatch repair MutL/HexB family.

Its function is as follows. This protein is involved in the repair of mismatches in DNA. It is required for dam-dependent methyl-directed DNA mismatch repair. May act as a 'molecular matchmaker', a protein that promotes the formation of a stable complex between two or more DNA-binding proteins in an ATP-dependent manner without itself being part of a final effector complex. In Bacillus cytotoxicus (strain DSM 22905 / CIP 110041 / 391-98 / NVH 391-98), this protein is DNA mismatch repair protein MutL.